A 916-amino-acid chain; its full sequence is Protein translocase subunit SecA (916 aa).

Residues Gln87, 105–109 (GEGKT), and Asp507 contribute to the ATP site. Zn(2+) is bound by residues Cys900, Cys902, Cys911, and His912.

It belongs to the SecA family. As to quaternary structure, monomer and homodimer. Part of the essential Sec protein translocation apparatus which comprises SecA, SecYEG and auxiliary proteins SecDF-YajC and YidC. Requires Zn(2+) as cofactor.

The protein localises to the cell inner membrane. It localises to the cytoplasm. The enzyme catalyses ATP + H2O + cellular proteinSide 1 = ADP + phosphate + cellular proteinSide 2.. In terms of biological role, part of the Sec protein translocase complex. Interacts with the SecYEG preprotein conducting channel. Has a central role in coupling the hydrolysis of ATP to the transfer of proteins into and across the cell membrane, serving both as a receptor for the preprotein-SecB complex and as an ATP-driven molecular motor driving the stepwise translocation of polypeptide chains across the membrane. The chain is Protein translocase subunit SecA from Neisseria meningitidis serogroup C (strain 053442).